Consider the following 205-residue polypeptide: DNA-directed RNA polymerase RPB5 homolog (205 aa).

This sequence belongs to the archaeal RpoH/eukaryotic RPB5 RNA polymerase subunit family. Part of the viral DNA-directed RNA polymerase that consists of 8 polII-like subunits (RPB1, RPB2, RPB3, RPB5, RPB6, RPB7, RPB9, RPB10), a capping enzyme and a termination factor.

The protein localises to the host cytoplasm. The protein resides in the virion. Its function is as follows. Component of the DNA-directed RNA polymerase (RNAP) that catalyzes the transcription in the cytoplasm of viral DNA into RNA using the four ribonucleoside triphosphates as substrates. This chain is DNA-directed RNA polymerase RPB5 homolog, found in Ornithodoros (relapsing fever ticks).